Consider the following 864-residue polypeptide: Leucine--tRNA ligase (864 aa).

Positions 42-52 (PYPSGKLHMGH) match the 'HIGH' region motif. Residues 624-628 (KMSKS) carry the 'KMSKS' region motif. Lys-627 provides a ligand contact to ATP.

Belongs to the class-I aminoacyl-tRNA synthetase family.

The protein resides in the cytoplasm. It catalyses the reaction tRNA(Leu) + L-leucine + ATP = L-leucyl-tRNA(Leu) + AMP + diphosphate. In Burkholderia mallei (strain NCTC 10229), this protein is Leucine--tRNA ligase.